The following is a 125-amino-acid chain: Small ribosomal subunit protein uS13 (125 aa).

The interval 91-125 (HRRSLPVRGQNTQTNARTRKGKRKTVAGKKKAARK) is disordered. Residues 107-125 (RTRKGKRKTVAGKKKAARK) show a composition bias toward basic residues.

It belongs to the universal ribosomal protein uS13 family. In terms of assembly, part of the 30S ribosomal subunit. Forms a loose heterodimer with protein S19. Forms two bridges to the 50S subunit in the 70S ribosome.

Functionally, located at the top of the head of the 30S subunit, it contacts several helices of the 16S rRNA. In the 70S ribosome it contacts the 23S rRNA (bridge B1a) and protein L5 of the 50S subunit (bridge B1b), connecting the 2 subunits; these bridges are implicated in subunit movement. Contacts the tRNAs in the A and P-sites. This Chlorobium phaeovibrioides (strain DSM 265 / 1930) (Prosthecochloris vibrioformis (strain DSM 265)) protein is Small ribosomal subunit protein uS13.